The chain runs to 844 residues: Patched-related protein 9 (844 aa).

The SSD domain occupies 264 to 421; it reads LIPWMPWTSL…VTFFNAVMSL (158 aa).

It belongs to the patched family.

This is Patched-related protein 9 (ptr-9) from Caenorhabditis elegans.